A 952-amino-acid chain; its full sequence is Glycine dehydrogenase (decarboxylating) (952 aa).

At Lys-703 the chain carries N6-(pyridoxal phosphate)lysine.

Belongs to the GcvP family. The glycine cleavage system is composed of four proteins: P, T, L and H. Pyridoxal 5'-phosphate serves as cofactor.

It carries out the reaction N(6)-[(R)-lipoyl]-L-lysyl-[glycine-cleavage complex H protein] + glycine + H(+) = N(6)-[(R)-S(8)-aminomethyldihydrolipoyl]-L-lysyl-[glycine-cleavage complex H protein] + CO2. Functionally, the glycine cleavage system catalyzes the degradation of glycine. The P protein binds the alpha-amino group of glycine through its pyridoxal phosphate cofactor; CO(2) is released and the remaining methylamine moiety is then transferred to the lipoamide cofactor of the H protein. The chain is Glycine dehydrogenase (decarboxylating) from Mycobacterium leprae (strain Br4923).